Reading from the N-terminus, the 102-residue chain is Urease subunit beta (102 aa).

Belongs to the urease beta subunit family. Heterotrimer of UreA (gamma), UreB (beta) and UreC (alpha) subunits. Three heterotrimers associate to form the active enzyme.

It localises to the cytoplasm. It catalyses the reaction urea + 2 H2O + H(+) = hydrogencarbonate + 2 NH4(+). The protein operates within nitrogen metabolism; urea degradation; CO(2) and NH(3) from urea (urease route): step 1/1. In Methylibium petroleiphilum (strain ATCC BAA-1232 / LMG 22953 / PM1), this protein is Urease subunit beta.